Consider the following 203-residue polypeptide: Small ribosomal subunit protein uS4 (203 aa).

Residues 93–156 (RRLDNVVYRL…MKVPAILEAV (64 aa)) form the S4 RNA-binding domain.

It belongs to the universal ribosomal protein uS4 family. Part of the 30S ribosomal subunit. Contacts protein S5. The interaction surface between S4 and S5 is involved in control of translational fidelity.

Functionally, one of the primary rRNA binding proteins, it binds directly to 16S rRNA where it nucleates assembly of the body of the 30S subunit. In terms of biological role, with S5 and S12 plays an important role in translational accuracy. In Streptococcus agalactiae serotype Ia (strain ATCC 27591 / A909 / CDC SS700), this protein is Small ribosomal subunit protein uS4.